Reading from the N-terminus, the 234-residue chain is Orotidine 5'-phosphate decarboxylase (234 aa).

Residues Asp-10, Lys-31, 58 to 67 (DLKLHDIPNT), Thr-121, Arg-183, Gln-192, Gly-212, and Arg-213 contribute to the substrate site. Lys-60 functions as the Proton donor in the catalytic mechanism.

The protein belongs to the OMP decarboxylase family. Type 1 subfamily. As to quaternary structure, homodimer.

The catalysed reaction is orotidine 5'-phosphate + H(+) = UMP + CO2. The protein operates within pyrimidine metabolism; UMP biosynthesis via de novo pathway; UMP from orotate: step 2/2. In terms of biological role, catalyzes the decarboxylation of orotidine 5'-monophosphate (OMP) to uridine 5'-monophosphate (UMP). This Lysinibacillus sphaericus (strain C3-41) protein is Orotidine 5'-phosphate decarboxylase.